Here is an 898-residue protein sequence, read N- to C-terminus: DNA topoisomerase 1 (898 aa).

The region spanning Ser-2–Thr-126 is the Toprim domain. Residues Glu-8 and Asp-95 each contribute to the Mg(2+) site. The Topo IA-type catalytic domain maps to Asp-141 to Glu-583. The segment at Ser-175–Gln-180 is interaction with DNA. Residue Tyr-320 is the O-(5'-phospho-DNA)-tyrosine intermediate of the active site. The interval Ala-840–Gly-898 is disordered. Over residues Lys-848 to Ser-866 the composition is skewed to basic residues. Over residues Lys-867 to Lys-877 the composition is skewed to low complexity. A compositionally biased stretch (basic residues) spans Thr-878 to Ala-888.

It belongs to the type IA topoisomerase family. Monomer. Mg(2+) serves as cofactor.

It carries out the reaction ATP-independent breakage of single-stranded DNA, followed by passage and rejoining.. In terms of biological role, releases the supercoiling and torsional tension of DNA, which is introduced during the DNA replication and transcription, by transiently cleaving and rejoining one strand of the DNA duplex. Introduces a single-strand break via transesterification at a target site in duplex DNA. The scissile phosphodiester is attacked by the catalytic tyrosine of the enzyme, resulting in the formation of a DNA-(5'-phosphotyrosyl)-enzyme intermediate and the expulsion of a 3'-OH DNA strand. The free DNA strand then undergoes passage around the unbroken strand, thus removing DNA supercoils. Finally, in the religation step, the DNA 3'-OH attacks the covalent intermediate to expel the active-site tyrosine and restore the DNA phosphodiester backbone. This chain is DNA topoisomerase 1, found in Synechocystis sp. (strain ATCC 27184 / PCC 6803 / Kazusa).